Here is a 103-residue protein sequence, read N- to C-terminus: Small ribosomal subunit protein uS10 (103 aa).

Belongs to the universal ribosomal protein uS10 family. As to quaternary structure, part of the 30S ribosomal subunit.

In terms of biological role, involved in the binding of tRNA to the ribosomes. This Clostridioides difficile (strain 630) (Peptoclostridium difficile) protein is Small ribosomal subunit protein uS10.